Consider the following 444-residue polypeptide: D(2) dopamine receptor (444 aa).

The Extracellular segment spans residues 1-37; the sequence is MDPLNLSWYDDDLERQNWSRPFNGSEGKPDRPHYNYY. Asn5, Asn17, and Asn23 each carry an N-linked (GlcNAc...) asparagine glycan. The helical transmembrane segment at 38–60 threads the bilayer; that stretch reads AMLLTLLIFIIVFGNVLVCMAVS. Residues 61–70 are Cytoplasmic-facing; it reads REKALQTTTN. The helical transmembrane segment at 71 to 93 threads the bilayer; sequence YLIVSLAVADLLVATLVMPWVVY. Residues 94-108 are Extracellular-facing; it reads LEVVGEWKFSRIHCD. Cys107 and Cys182 form a disulfide bridge. Residues 109–130 traverse the membrane as a helical segment; sequence IFVTLDVMMCTASILNLCAISI. Over 131-151 the chain is Cytoplasmic; it reads DRYTAVAMPMLYNTRYSSKRR. The chain crosses the membrane as a helical span at residues 152 to 172; sequence VTVMIAIVWVLSFTISCPLLF. Topologically, residues 173-188 are extracellular; it reads GLNNTDQNECIIANPA. Residues 189–213 form a helical membrane-spanning segment; it reads FVVYSSIVSFYVPFIVTLLVYIKIY. Residues 211–374 form an interaction with PPP1R9B region; sequence KIYIVLRKRR…SQQKEKKATQ (164 aa). The Cytoplasmic segment spans residues 214 to 374; the sequence is IVLRKRRKRV…SQQKEKKATQ (161 aa). The disordered stretch occupies residues 282-329; it reads EMLSSTSPPERTRYSPIPPSHHQLTLPDPSHHGLHSNPDSPAKPEKNG. Residues 375-396 form a helical membrane-spanning segment; that stretch reads MLAIVLGVFIICWLPFFITHIL. Residues 397–410 lie on the Extracellular side of the membrane; it reads NIHCDCNIPPVLYS. Cys400 and Cys402 are joined by a disulfide. Residues 411-432 form a helical membrane-spanning segment; sequence AFTWLGYVNSAVNPIIYTTFNI. Residues 433 to 444 are Cytoplasmic-facing; that stretch reads EFRKAFMKILHC. Cys444 is lipidated: S-palmitoyl cysteine.

The protein belongs to the G-protein coupled receptor 1 family. Forms homo- and heterooligomers with DRD4. The interaction with DRD4 may modulate agonist-induced downstream signaling. Interacts with CADPS and CADPS2. Interacts with GPRASP1, PPP1R9B and CLIC6. Interacts with ARRB2. Interacts with HTR2A. Interacts with DRD1. In terms of assembly, interacts with KCNA2. Palmitoylated. Palmitoylation which is required for proper localization to the plasma membrane and stability of the receptor could be carried on by ZDHHC4, ZDHHC3 and ZDHHC8. In terms of tissue distribution, expressed in retinal hyaloid vessels at postnatal day 6. As to expression, expressed in the pituitary gland, stratum, brain stem and cortex. Expressed in the brain stem.

It is found in the cell membrane. The protein localises to the golgi apparatus membrane. In terms of biological role, dopamine receptor whose activity is mediated by G proteins which inhibit adenylyl cyclase. Positively regulates postnatal regression of retinal hyaloid vessels via suppression of VEGFR2/KDR activity, downstream of OPN5. The protein is D(2) dopamine receptor (Drd2) of Mus musculus (Mouse).